An 860-amino-acid polypeptide reads, in one-letter code: Leucine--tRNA ligase (860 aa).

The short motif at 42 to 52 (PYPSGRLHMGH) is the 'HIGH' region element. The 'KMSKS' region motif lies at 619 to 623 (KMSKS). An ATP-binding site is contributed by Lys-622.

This sequence belongs to the class-I aminoacyl-tRNA synthetase family.

It is found in the cytoplasm. It carries out the reaction tRNA(Leu) + L-leucine + ATP = L-leucyl-tRNA(Leu) + AMP + diphosphate. The sequence is that of Leucine--tRNA ligase from Salmonella agona (strain SL483).